The following is a 352-amino-acid chain: UDP-N-acetylglucosamine--N-acetylmuramyl-(pentapeptide) pyrophosphoryl-undecaprenol N-acetylglucosamine transferase 2 (352 aa).

UDP-N-acetyl-alpha-D-glucosamine-binding positions include 11 to 13 (SAG), arginine 164, serine 194, and glutamine 289.

Belongs to the glycosyltransferase 28 family. MurG subfamily.

It is found in the cell membrane. It carries out the reaction di-trans,octa-cis-undecaprenyl diphospho-N-acetyl-alpha-D-muramoyl-L-alanyl-D-glutamyl-meso-2,6-diaminopimeloyl-D-alanyl-D-alanine + UDP-N-acetyl-alpha-D-glucosamine = di-trans,octa-cis-undecaprenyl diphospho-[N-acetyl-alpha-D-glucosaminyl-(1-&gt;4)]-N-acetyl-alpha-D-muramoyl-L-alanyl-D-glutamyl-meso-2,6-diaminopimeloyl-D-alanyl-D-alanine + UDP + H(+). Its pathway is cell wall biogenesis; peptidoglycan biosynthesis. Functionally, cell wall formation. Catalyzes the transfer of a GlcNAc subunit on undecaprenyl-pyrophosphoryl-MurNAc-pentapeptide (lipid intermediate I) to form undecaprenyl-pyrophosphoryl-MurNAc-(pentapeptide)GlcNAc (lipid intermediate II). The polypeptide is UDP-N-acetylglucosamine--N-acetylmuramyl-(pentapeptide) pyrophosphoryl-undecaprenol N-acetylglucosamine transferase 2 (Bacillus thuringiensis subsp. konkukian (strain 97-27)).